Consider the following 453-residue polypeptide: Phenylalanine-4-hydroxylase (453 aa).

Alanine 2 carries the post-translational modification N-acetylalanine. Residue serine 16 is modified to Phosphoserine. One can recognise an ACT domain in the interval serine 36 to glutamate 114. The Fe cation site is built by histidine 285, histidine 290, and glutamate 330.

This sequence belongs to the biopterin-dependent aromatic amino acid hydroxylase family. As to quaternary structure, homodimer and homotetramer. Fe(2+) is required as a cofactor. In terms of processing, phosphorylation at Ser-16 increases basal activity and facilitates activation by the substrate phenylalanine.

The catalysed reaction is (6R)-L-erythro-5,6,7,8-tetrahydrobiopterin + L-phenylalanine + O2 = (4aS,6R)-4a-hydroxy-L-erythro-5,6,7,8-tetrahydrobiopterin + L-tyrosine. The protein operates within amino-acid degradation; L-phenylalanine degradation; acetoacetate and fumarate from L-phenylalanine: step 1/6. With respect to regulation, N-terminal region of PAH is thought to contain allosteric binding sites for phenylalanine and to constitute an 'inhibitory' domain that regulates the activity of a catalytic domain in the C-terminal portion of the molecule. In terms of biological role, catalyzes the hydroxylation of L-phenylalanine to L-tyrosine. In Mus musculus (Mouse), this protein is Phenylalanine-4-hydroxylase (Pah).